The chain runs to 125 residues: MIYGIGTDLVETSRITRLLEKYGERFARRLLTDEEWPEYAKSMQPAMFLAKRFAAKEALAKAFGTGIRHPVSLSHIGVTHDTLGKPYFKFHPELHTLVQNEGITRHHLSISDELNLACAFVILEK.

Mg(2+)-binding residues include aspartate 8 and glutamate 57.

Belongs to the P-Pant transferase superfamily. AcpS family. It depends on Mg(2+) as a cofactor.

The protein resides in the cytoplasm. The catalysed reaction is apo-[ACP] + CoA = holo-[ACP] + adenosine 3',5'-bisphosphate + H(+). Its function is as follows. Transfers the 4'-phosphopantetheine moiety from coenzyme A to a Ser of acyl-carrier-protein. The polypeptide is Holo-[acyl-carrier-protein] synthase (Nitrosospira multiformis (strain ATCC 25196 / NCIMB 11849 / C 71)).